The following is a 277-amino-acid chain: Large ribosomal subunit protein uL2 (277 aa).

The interval 219 to 277 is disordered; sequence TVRGSVMNPNDHPHGGGEGRSPIGHPSPRTPWGKPALGYKTRKNKKYSDRFIVKRRHDK.

It belongs to the universal ribosomal protein uL2 family. In terms of assembly, part of the 50S ribosomal subunit. Forms a bridge to the 30S subunit in the 70S ribosome.

One of the primary rRNA binding proteins. Required for association of the 30S and 50S subunits to form the 70S ribosome, for tRNA binding and peptide bond formation. It has been suggested to have peptidyltransferase activity; this is somewhat controversial. Makes several contacts with the 16S rRNA in the 70S ribosome. The chain is Large ribosomal subunit protein uL2 from Clostridium botulinum (strain Okra / Type B1).